A 417-amino-acid chain; its full sequence is Phosphoglycerate kinase, cytosolic (417 aa).

Valine 23, aspartate 24, phenylalanine 25, asparagine 26, arginine 39, serine 61, histidine 62, glycine 64, arginine 65, arginine 132, histidine 168, and arginine 169 together coordinate (2R)-3-phosphoglycerate. Residues glycine 214 and alanine 215 each contribute to the ADP site. A CDP-binding site is contributed by glycine 214. Positions 215 and 216 each coordinate AMP. Alanine 215 provides a ligand contact to ATP. Alanine 215 provides a ligand contact to Mg(2+). Lysine 216 is a binding site for (2R)-3-phosphoglycerate. Residue aspartate 219 coordinates CDP. Aspartate 219 contacts Mg(2+). The ADP site is built by lysine 220 and glycine 238. An AMP-binding site is contributed by lysine 220. Residue lysine 220 participates in ATP binding. A CDP-binding site is contributed by glycine 238. Alanine 239 and alanine 311 together coordinate AMP. Positions 239 and 311 each coordinate ATP. ADP is bound by residues alanine 311 and asparagine 335. The CDP site is built by glycine 336 and phenylalanine 341. ADP-binding residues include phenylalanine 341, glutamate 342, aspartate 374, and threonine 375. Glutamate 342 is an AMP binding site. The ATP site is built by glutamate 342, aspartate 374, and threonine 375. Position 374 (aspartate 374) interacts with Mg(2+).

Belongs to the phosphoglycerate kinase family. As to quaternary structure, monomer. Mg(2+) is required as a cofactor.

It localises to the cytoplasm. The catalysed reaction is (2R)-3-phosphoglycerate + ATP = (2R)-3-phospho-glyceroyl phosphate + ADP. It functions in the pathway carbohydrate degradation; glycolysis; pyruvate from D-glyceraldehyde 3-phosphate: step 2/5. The protein is Phosphoglycerate kinase, cytosolic (PGKB) of Crithidia fasciculata.